A 447-amino-acid polypeptide reads, in one-letter code: tRNA-2-methylthio-N(6)-dimethylallyladenosine synthase (447 aa).

Positions 10 to 128 (KLFCISTYGC…FPEYLHRVLQ (119 aa)) constitute an MTTase N-terminal domain. Positions 19, 55, 89, 165, 169, and 172 each coordinate [4Fe-4S] cluster. A Radical SAM core domain is found at 151 to 382 (RKSDVKAFVT…EAINKKVVIK (232 aa)). The 64-residue stretch at 384–447 (KEYEGKVVEV…PFSLIGEIVE (64 aa)) folds into the TRAM domain.

Belongs to the methylthiotransferase family. MiaB subfamily. In terms of assembly, monomer. It depends on [4Fe-4S] cluster as a cofactor.

It is found in the cytoplasm. It carries out the reaction N(6)-dimethylallyladenosine(37) in tRNA + (sulfur carrier)-SH + AH2 + 2 S-adenosyl-L-methionine = 2-methylsulfanyl-N(6)-dimethylallyladenosine(37) in tRNA + (sulfur carrier)-H + 5'-deoxyadenosine + L-methionine + A + S-adenosyl-L-homocysteine + 2 H(+). Its function is as follows. Catalyzes the methylthiolation of N6-(dimethylallyl)adenosine (i(6)A), leading to the formation of 2-methylthio-N6-(dimethylallyl)adenosine (ms(2)i(6)A) at position 37 in tRNAs that read codons beginning with uridine. In Clostridium perfringens (strain ATCC 13124 / DSM 756 / JCM 1290 / NCIMB 6125 / NCTC 8237 / Type A), this protein is tRNA-2-methylthio-N(6)-dimethylallyladenosine synthase.